A 600-amino-acid polypeptide reads, in one-letter code: Proline--tRNA ligase (600 aa).

Belongs to the class-II aminoacyl-tRNA synthetase family. ProS type 1 subfamily. As to quaternary structure, homodimer.

It localises to the cytoplasm. The enzyme catalyses tRNA(Pro) + L-proline + ATP = L-prolyl-tRNA(Pro) + AMP + diphosphate. Its function is as follows. Catalyzes the attachment of proline to tRNA(Pro) in a two-step reaction: proline is first activated by ATP to form Pro-AMP and then transferred to the acceptor end of tRNA(Pro). As ProRS can inadvertently accommodate and process non-cognate amino acids such as alanine and cysteine, to avoid such errors it has two additional distinct editing activities against alanine. One activity is designated as 'pretransfer' editing and involves the tRNA(Pro)-independent hydrolysis of activated Ala-AMP. The other activity is designated 'posttransfer' editing and involves deacylation of mischarged Ala-tRNA(Pro). The misacylated Cys-tRNA(Pro) is not edited by ProRS. The sequence is that of Proline--tRNA ligase from Prochlorococcus marinus subsp. pastoris (strain CCMP1986 / NIES-2087 / MED4).